A 376-amino-acid chain; its full sequence is Drebrin-like protein B (376 aa).

Residues S2–A133 form the ADF-H domain. Positions K175–D231 form a coiled coil. The span at D202–K242 shows a compositional bias: basic and acidic residues. The tract at residues D202–N288 is disordered. Polar residues predominate over residues E268–Q283. Positions D317 to E376 constitute an SH3 domain.

Belongs to the ABP1 family.

The protein resides in the cytoplasm. It localises to the cytoskeleton. The protein localises to the cell projection. It is found in the lamellipodium. Its subcellular location is the ruffle. The protein resides in the cell cortex. It localises to the cytosol. The protein localises to the synapse. It is found in the perikaryon. Its subcellular location is the neuron projection. The protein resides in the cell membrane. It localises to the cytoplasmic vesicle. The protein localises to the clathrin-coated vesicle membrane. It is found in the golgi apparatus membrane. Its subcellular location is the podosome. The protein resides in the early endosome. It localises to the dendrite. The protein localises to the postsynaptic density. Functionally, adapter protein that binds F-actin and dynamin, and thereby plays a role in receptor-mediated endocytosis. Plays a role in the reorganization of the actin cytoskeleton, formation of cell projections, such as neurites, in neuron morphogenesis and synapse formation. Does not bind G-actin and promote actin polymerization by itself, but excerts its functions by interaction with other proteins. Required for the formation of organized podosome rosettes. The chain is Drebrin-like protein B (dbnl-b) from Xenopus laevis (African clawed frog).